We begin with the raw amino-acid sequence, 1077 residues long: Bifunctional helicase and thymine dioxygenase JBP2 (1077 aa).

The interval 1-516 is thymine dioxygenase; the sequence is MPMFMDGASQ…PPLCIPFKIA (516 aa). Positions 391, 393, and 441 each coordinate Fe cation. 2-oxoglutarate is bound at residue Arg455. The DNA Helicase stretch occupies residues 517 to 1075; the sequence is KTLSLTQHAA…RNIDTVKSER (559 aa). A Helicase ATP-binding domain is found at 531–706; sequence SRRIKEGDGC…YRLVGWVDDK (176 aa). Residue 544–551 participates in ATP binding; the sequence is LTMGLGKT. A DEAH box motif is present at residues 657-660; it reads DEGH. The Helicase C-terminal domain occupies 871–1032; it reads KLTALISILH…QVVPGHDLVD (162 aa).

This sequence in the C-terminal section; belongs to the SNF2/RAD54 helicase family. It in the N-terminal section; belongs to the TET family. JBP2 subfamily. Fe(2+) is required as a cofactor.

The protein localises to the nucleus. It carries out the reaction ATP + H2O = ADP + phosphate + H(+). It catalyses the reaction thymine + 2-oxoglutarate + O2 = 5-hydroxymethyluracil + succinate + CO2. Dioxygenase that catalyzes the first step of DNA base J (beta-d-glucosyl-HOMedU) biosynthesis by converting thymine to 5-hydroxymethyluracil (HOMedU). DNA base J is a hypermodified thymidine residue found in the genome of kinetoplastid parasites, which is localized primarily to repetitive DNA, namely the telomeres, and is implicated in the regulation of antigenic variation. Probably also acts as a DNA helicase. Recognizes and binds specific regions of the genome, hydrolyzes ATP and allows the DNA base J de novo synthesis. Involved in initial synthesis of DNA base J, JBP1 being able to act via the basal level of DNA base J and propagate further synthesis. In contrast to JBP1, it does not specifically bind DNA base J, however it binds chromatin. This chain is Bifunctional helicase and thymine dioxygenase JBP2 (JBP2), found in Trypanosoma brucei brucei (strain 927/4 GUTat10.1).